The sequence spans 461 residues: Cysteine--tRNA ligase (461 aa).

Position 29 (Cys29) interacts with Zn(2+). The short motif at 31-41 is the 'HIGH' region element; the sequence is MTVYDFCHIGH. Zn(2+)-binding residues include Cys210, His235, and Glu239. The 'KMSKS' region signature appears at 267–271; sequence KMSKS. An ATP-binding site is contributed by Lys270.

This sequence belongs to the class-I aminoacyl-tRNA synthetase family. Monomer. Requires Zn(2+) as cofactor.

It localises to the cytoplasm. The catalysed reaction is tRNA(Cys) + L-cysteine + ATP = L-cysteinyl-tRNA(Cys) + AMP + diphosphate. This Azotobacter vinelandii (strain DJ / ATCC BAA-1303) protein is Cysteine--tRNA ligase.